Consider the following 165-residue polypeptide: Crossover junction endodeoxyribonuclease RuvC (165 aa).

Residues Asp7, Glu66, and Asp138 contribute to the active site. 3 residues coordinate Mg(2+): Asp7, Glu66, and Asp138.

It belongs to the RuvC family. Homodimer which binds Holliday junction (HJ) DNA. The HJ becomes 2-fold symmetrical on binding to RuvC with unstacked arms; it has a different conformation from HJ DNA in complex with RuvA. In the full resolvosome a probable DNA-RuvA(4)-RuvB(12)-RuvC(2) complex forms which resolves the HJ. Requires Mg(2+) as cofactor.

It is found in the cytoplasm. It carries out the reaction Endonucleolytic cleavage at a junction such as a reciprocal single-stranded crossover between two homologous DNA duplexes (Holliday junction).. Functionally, the RuvA-RuvB-RuvC complex processes Holliday junction (HJ) DNA during genetic recombination and DNA repair. Endonuclease that resolves HJ intermediates. Cleaves cruciform DNA by making single-stranded nicks across the HJ at symmetrical positions within the homologous arms, yielding a 5'-phosphate and a 3'-hydroxyl group; requires a central core of homology in the junction. The consensus cleavage sequence is 5'-(A/T)TT(C/G)-3'. Cleavage occurs on the 3'-side of the TT dinucleotide at the point of strand exchange. HJ branch migration catalyzed by RuvA-RuvB allows RuvC to scan DNA until it finds its consensus sequence, where it cleaves and resolves the cruciform DNA. The sequence is that of Crossover junction endodeoxyribonuclease RuvC from Ruegeria pomeroyi (strain ATCC 700808 / DSM 15171 / DSS-3) (Silicibacter pomeroyi).